We begin with the raw amino-acid sequence, 787 residues long: Formate acetyltransferase (787 aa).

The 622-residue stretch at 8-629 (NIFEQAWDGF…GNSPVHKGVF (622 aa)) folds into the PFL domain. The active-site S-acetylcysteine intermediate is cysteine 416. The active-site Cysteine radical intermediate is cysteine 417. The region spanning 645 to 774 (SPGANPSNKA…LTERVFHEVL (130 aa)) is the Glycine radical domain. The residue at position 749 (glycine 749) is a Glycine radical.

The protein belongs to the glycyl radical enzyme (GRE) family. PFL subfamily. In terms of assembly, homodimer.

It localises to the cytoplasm. The enzyme catalyses formate + acetyl-CoA = pyruvate + CoA. It functions in the pathway fermentation; pyruvate fermentation; formate from pyruvate: step 1/1. This Lactococcus lactis subsp. lactis (strain IL1403) (Streptococcus lactis) protein is Formate acetyltransferase (pfl).